Here is a 214-residue protein sequence, read N- to C-terminus: Orotate phosphoribosyltransferase (214 aa).

5-phospho-alpha-D-ribose 1-diphosphate is bound by residues arginine 125, lysine 126, lysine 129, histidine 131, and 151–159 (EDTSTTGNS). 2 residues coordinate orotate: threonine 155 and arginine 183.

It belongs to the purine/pyrimidine phosphoribosyltransferase family. PyrE subfamily. Homodimer. It depends on Mg(2+) as a cofactor.

It catalyses the reaction orotidine 5'-phosphate + diphosphate = orotate + 5-phospho-alpha-D-ribose 1-diphosphate. The protein operates within pyrimidine metabolism; UMP biosynthesis via de novo pathway; UMP from orotate: step 1/2. In terms of biological role, catalyzes the transfer of a ribosyl phosphate group from 5-phosphoribose 1-diphosphate to orotate, leading to the formation of orotidine monophosphate (OMP). In Tropheryma whipplei (strain Twist) (Whipple's bacillus), this protein is Orotate phosphoribosyltransferase.